We begin with the raw amino-acid sequence, 883 residues long: Probable pre-mRNA-splicing factor ATP-dependent RNA helicase DEAH8 (883 aa).

In terms of domain architecture, Helicase ATP-binding spans 232-395; sequence LKLIEENQVL…FDSARIYLIP (164 aa). 245-252 contributes to the ATP binding site; it reads GETGSGKT. A DEAH box motif is present at residues 342 to 345; sequence DEAH. In terms of domain architecture, Helicase C-terminal spans 416-589; the sequence is TVIRTVVQIH…SVVLTLKSLG (174 aa). Positions 845-883 are disordered; sequence EDTRPKKTQRRIEEASTSKVDTNKKTRTSKVDTNKKSKR.

It belongs to the DEAD box helicase family. DEAH subfamily. PRP2 sub-subfamily. As to expression, predominantly expressed in flowers.

It catalyses the reaction ATP + H2O = ADP + phosphate + H(+). In terms of biological role, may be involved in pre-mRNA splicing. This chain is Probable pre-mRNA-splicing factor ATP-dependent RNA helicase DEAH8, found in Arabidopsis thaliana (Mouse-ear cress).